The following is a 200-amino-acid chain: MNKAELIDVLTQKLGSDRRQATAAVENVVDTIVRAVHKGDSVTITGFGVFEQRRRAARVARNPRTGETVKVKPTSVPAFRPGAQFKAVVAGAQRLPLEGPAVKRGVATSAAKKAAIKKAPVKKALAKKAATKAPAKKAVKAPAKKITTAVKVPAKKATKVVKKVAAKAPVRKATTRALAKKAAVKKAPAKKVTAAKRGRK.

The bacterial histone-like domain stretch occupies residues 1 to 90 (MNKAELIDVL…PGAQFKAVVA (90 aa)). K3, K72, K86, K103, K137, K144, and K156 each carry N6-acetyllysine. Residues 101 to 200 (AVKRGVATSA…KVTAAKRGRK (100 aa)) form a degenerate repeats region region. A disordered region spans residues 179-200 (AKKAAVKKAPAKKVTAAKRGRK).

It belongs to the bacterial histone-like protein family. Long actinobacterial subfamily. As to quaternary structure, binds to human laminin-2. May also be methylated and possibly phosphorylated in vivo.

The protein resides in the cytoplasm. It is found in the nucleoid. It localises to the secreted. Its subcellular location is the cell wall. The protein localises to the cell surface. The enzyme catalyses 4 Fe(2+) + O2 + 4 H(+) = 4 Fe(3+) + 2 H2O. In terms of biological role, a nucleoid-associated protein (NAP) that plays a role in local chromosome architecture and chromosome compactation. Required for biofilm formation, stress survival and possibly in cell wall assembly, probably influences transcription. RNase E and HupB jointly contribute to cellular adaptation to changing growth conditions and survival during antibiotic treatment and in the host. Functionally, binds Fe(3+) but not Fe(2+). Has ferroxidase activity, converts Fe(2+) into Fe(3+) and in the presence of H(2)O(2) prevents the generation of hydroxyl radicals (the Fenton reaction). Protects DNA from damage in the presence of FeSO(4) and H(2)O(2). May function in iron storage. May be involved in entry into human Schwann cells. In Mycobacterium leprae (strain TN), this protein is DNA-binding protein HupB.